The sequence spans 959 residues: MSDKTNDDKTLSVNPKKTLTLKRPGVEQSTVRQNFSHGRTKAVVVETKKRKFSRPDEKPEVEAAAAPKPAAPAAAPQQAPASAPVSASAAQASAPQPAPVKAPATKAPAAPSAPVTKPHVAQQRPVHQRPGGQQAQRPRPADRSGMVLNTLSRSEMDARRRALEEAQIREVEERARAVEEAKRRAEEDARRAKEHEESARRQAEEEARLKAEAEARRKAEEEAAKRMPQPEARSERRDDARPAPYGARPQQAGRPQGGRPQPAGRPQQGSPRPAPIIADAAPIAGKPLPQSQLRKPGQSDDDDDRRSGAARRGVAAKPEVRAPKVVKGEDDRRRGKLTLTSNLEEEGRSRSLSAMRRRQEKFKRSQMQETREKISREVTIPETITLQELAQRMAERSVDIIKYLMKQGQMMKPGDVIDADTAQLIAEEFGHTVKRVAESDVEEGIFDVADNESAMVSRPPVVTIMGHVDHGKTSLLDAIRHANVVSGEAGGITQHIGAYQVVQNGQKITFIDTPGHAAFTAMRARGAQATDIAILVVAADDSVMPQTIESINHAKAAGVPIIVAINKIDKPAADPQKVRTALLQHEVFVESMGGEVLDVEVSAKNKINLDKLLDAVLLQAEMLDLKADPDRTAEGVVIEAQLDRGRGSVATVLIQKGTLHPGDILVAGSEWGRVRALVNDRGEHVKEAGPAMPVEILGLQGTPQAGDRFAVVANEAKAREIAEYRQRLARDKAVARQSGARGSLEQMMNQLQVSGTKEFPLVIKGDVQGSIEAITNALDKLGTDEVRARIVHSGAGGITESDVSLAEASNAAIIGFNVRANKQARDSAEQQGIEIRYYNIIYDLIDDVKAAMSGLLSPERRETFLGNAEILEVFNITKVGKVAGCRVTEGKVERGAGVRLIRDNVVIHEGKLKTLKRFKDEVAEVPSGQECGMAFENYDDIRAGDVIEAFRVEHVSRTL.

Basic and acidic residues predominate over residues 1–10; it reads MSDKTNDDKT. A disordered region spans residues 1 to 374; that stretch reads MSDKTNDDKT…SQMQETREKI (374 aa). Residues 27 to 37 are compositionally biased toward polar residues; it reads EQSTVRQNFSH. Low complexity-rich tracts occupy residues 63 to 118 and 128 to 138; these read AAAA…VTKP and QRPGGQQAQRP. Composition is skewed to basic and acidic residues over residues 154-225 and 232-241; these read SEMD…EAAK and ARSERRDDAR. The span at 246–284 shows a compositional bias: low complexity; the sequence is GARPQQAGRPQGGRPQPAGRPQQGSPRPAPIIADAAPIA. Over residues 318–333 the composition is skewed to basic and acidic residues; it reads PEVRAPKVVKGEDDRR. The region spanning 457–626 is the tr-type G domain; it reads SRPPVVTIMG…LLQAEMLDLK (170 aa). Residues 466-473 are G1; it reads GHVDHGKT. 466 to 473 provides a ligand contact to GTP; that stretch reads GHVDHGKT. The interval 491–495 is G2; sequence GITQH. The tract at residues 512–515 is G3; sequence DTPG. GTP contacts are provided by residues 512–516 and 566–569; these read DTPGH and NKID. Residues 566 to 569 form a G4 region; that stretch reads NKID. The segment at 602 to 604 is G5; it reads SAK.

Belongs to the TRAFAC class translation factor GTPase superfamily. Classic translation factor GTPase family. IF-2 subfamily.

Its subcellular location is the cytoplasm. In terms of biological role, one of the essential components for the initiation of protein synthesis. Protects formylmethionyl-tRNA from spontaneous hydrolysis and promotes its binding to the 30S ribosomal subunits. Also involved in the hydrolysis of GTP during the formation of the 70S ribosomal complex. The sequence is that of Translation initiation factor IF-2 from Brucella melitensis biotype 1 (strain ATCC 23456 / CCUG 17765 / NCTC 10094 / 16M).